We begin with the raw amino-acid sequence, 429 residues long: Adenylosuccinate synthetase (429 aa).

Residues 12-18 (GDEGKGK) and 40-42 (GHT) contribute to the GTP site. The Proton acceptor role is filled by D13. Mg(2+) is bound by residues D13 and G40. IMP contacts are provided by residues 13-16 (DEGK), 38-41 (NAGH), T129, R143, Q223, T238, and R302. The Proton donor role is filled by H41. 298-304 (TVTGRRR) contacts substrate. GTP is bound by residues R304, 330 to 332 (KLD), and 412 to 414 (STS).

This sequence belongs to the adenylosuccinate synthetase family. In terms of assembly, homodimer. It depends on Mg(2+) as a cofactor.

The protein localises to the cytoplasm. The catalysed reaction is IMP + L-aspartate + GTP = N(6)-(1,2-dicarboxyethyl)-AMP + GDP + phosphate + 2 H(+). It participates in purine metabolism; AMP biosynthesis via de novo pathway; AMP from IMP: step 1/2. Its function is as follows. Plays an important role in the de novo pathway of purine nucleotide biosynthesis. Catalyzes the first committed step in the biosynthesis of AMP from IMP. The sequence is that of Adenylosuccinate synthetase from Zymomonas mobilis subsp. mobilis (strain ATCC 31821 / ZM4 / CP4).